Reading from the N-terminus, the 605-residue chain is Class II receptor tyrosine kinase (605 aa).

An Ig-like C2-type domain is found at 1 to 67 (MWSSPGRNLE…DGESASFRVD (67 aa)). The Extracellular portion of the chain corresponds to 1–84 (MWSSPGRNLE…GSNSGVIAGV (84 aa)). N-linked (GlcNAc...) asparagine glycans are attached at residues Asn-26, Asn-44, and Asn-72. A helical membrane pass occupies residues 85 to 105 (LITLLLLIALIIILICVFWVV). Topologically, residues 106–605 (WRYRRRGKFD…GRPRGVAGCV (500 aa)) are cytoplasmic. Positions 209–230 (EELSPIQEKPTRRNTGLSTYSQ) are disordered. Residues 221–230 (RNTGLSTYSQ) are compositionally biased toward polar residues. In terms of domain architecture, Protein kinase spans 346–605 (IREVKQIGVG…GRPRGVAGCV (260 aa)). ATP-binding positions include 352 to 360 (IGVGQFGAV) and Lys-393. The active-site Proton acceptor is Asp-496. Tyr-527 carries the post-translational modification Phosphotyrosine; by autocatalysis.

It belongs to the protein kinase superfamily. Tyr protein kinase family. Insulin receptor subfamily. Post-translationally, phosphorylated.

Its subcellular location is the cell membrane. The catalysed reaction is L-tyrosyl-[protein] + ATP = O-phospho-L-tyrosyl-[protein] + ADP + H(+). The protein is Class II receptor tyrosine kinase (TK) of Geodia cydonium (Sponge).